A 330-amino-acid polypeptide reads, in one-letter code: Putative heme-binding peroxidase (330 aa).

The active-site Proton acceptor is His38. Residue His162 coordinates heme b. The active-site Tryptophan radical intermediate is Trp178. The disordered stretch occupies residues 286–330 (GEYKSAPQKSPVPGAPGAGKDGEANPLARQNERAHGQAQHALAKL).

The protein belongs to the peroxidase family. Cytochrome c peroxidase subfamily. It depends on heme b as a cofactor.

Its function is as follows. Destroys radicals which are normally produced within the cells and which are toxic to biological systems. The sequence is that of Putative heme-binding peroxidase (CCP2) from Mycosarcoma maydis (Corn smut fungus).